The following is a 277-amino-acid chain: Carbonyl reductase [NADPH] 1 (277 aa).

At serine 2 the chain carries N-acetylserine. Serine 2 and serine 30 each carry phosphoserine. Residues 10-34 (VTGGNKGIGLAIVRDLCRLFSGDVV), 63-64 (DI), and asparagine 90 each bind NADP(+). Glutathione-binding positions include 95–97 (FKV) and glutamine 106. A substrate-binding site is contributed by serine 140. 193-194 (AY) contacts glutathione. Tyrosine 194 functions as the Proton acceptor in the catalytic mechanism. Residues 194 to 198 (YGVTK) and 231 to 233 (VRT) each bind NADP(+). The residue at position 239 (lysine 239) is an N6-1-carboxyethyl lysine.

Belongs to the short-chain dehydrogenases/reductases (SDR) family. As to quaternary structure, monomer.

The protein localises to the cytoplasm. The catalysed reaction is a secondary alcohol + NADP(+) = a ketone + NADPH + H(+). It catalyses the reaction prostaglandin F2alpha + NADP(+) = prostaglandin E2 + NADPH + H(+). The enzyme catalyses prostaglandin E1 + NADP(+) = 15-oxoprostaglandin E1 + NADPH + H(+). It carries out the reaction menadione + NADPH + H(+) = menadiol + NADP(+). The catalysed reaction is prostaglandin D2 + NADP(+) = 15-oxoprostaglandin D2 + NADPH + H(+). It catalyses the reaction prostaglandin E2 + NADP(+) = 15-oxoprostaglandin E2 + NADPH + H(+). The enzyme catalyses prostaglandin F2alpha + NADP(+) = 15-oxoprostaglandin F2alpha + NADPH + H(+). It carries out the reaction daunorubicin + NADPH + H(+) = 13-dihydrodaunorubicin + NADP(+). The catalysed reaction is S-nitrosoglutathione + NADPH + H(+) = S-(hydroxysulfenamide)glutathione + NADP(+). It catalyses the reaction a primary alcohol + NADP(+) = an aldehyde + NADPH + H(+). The enzyme catalyses cortisol + NADPH + H(+) = 20beta-dihydrocortisol + NADP(+). It carries out the reaction corticosterone + NADPH + H(+) = 20beta-dihydrocorticosterone + NADP(+). Functionally, NADPH-dependent reductase with broad substrate specificity. Catalyzes the reduction of a wide variety of carbonyl compounds including quinones, prostaglandins, menadione, plus various xenobiotics. Catalyzes the reduction of the antitumor anthracyclines doxorubicin and daunorubicin to the cardiotoxic compounds doxorubicinol and daunorubicinol. Can convert prostaglandin E to prostaglandin F2-alpha. Can bind glutathione, which explains its higher affinity for glutathione-conjugated substrates. Catalyzes the reduction of S-nitrosoglutathione. In addition, participates in the glucocorticoid metabolism by catalyzing the NADPH-dependent cortisol/corticosterone into 20beta-dihydrocortisol (20b-DHF) or 20beta-corticosterone (20b-DHB), which are weak agonists of NR3C1 and NR3C2 in adipose tissue. This is Carbonyl reductase [NADPH] 1 from Pongo abelii (Sumatran orangutan).